Reading from the N-terminus, the 317-residue chain is 3'-5' exoribonuclease YhaM (317 aa).

The segment at residues 17 to 90 (FLLIKESTRG…QLKILSIRLS (74 aa)) is a DNA-binding region (OB). One can recognise an HD domain in the interval 163-279 (HVVSMLAIGK…LHLIDLIDAK (117 aa)).

It belongs to the YhaM family.

Shows a 3'-5' exoribonuclease activity. The protein is 3'-5' exoribonuclease YhaM of Oceanobacillus iheyensis (strain DSM 14371 / CIP 107618 / JCM 11309 / KCTC 3954 / HTE831).